The following is a 616-amino-acid chain: Dihydroxy-acid dehydratase (616 aa).

Asp81 serves as a coordination point for Mg(2+). Cys122 contributes to the [2Fe-2S] cluster binding site. Mg(2+) is bound by residues Asp123 and Lys124. An N6-carboxylysine modification is found at Lys124. Cys195 contributes to the [2Fe-2S] cluster binding site. Glu491 is a binding site for Mg(2+). The active-site Proton acceptor is Ser517.

It belongs to the IlvD/Edd family. In terms of assembly, homodimer. [2Fe-2S] cluster serves as cofactor. The cofactor is Mg(2+).

It carries out the reaction (2R)-2,3-dihydroxy-3-methylbutanoate = 3-methyl-2-oxobutanoate + H2O. It catalyses the reaction (2R,3R)-2,3-dihydroxy-3-methylpentanoate = (S)-3-methyl-2-oxopentanoate + H2O. Its pathway is amino-acid biosynthesis; L-isoleucine biosynthesis; L-isoleucine from 2-oxobutanoate: step 3/4. The protein operates within amino-acid biosynthesis; L-valine biosynthesis; L-valine from pyruvate: step 3/4. Functions in the biosynthesis of branched-chain amino acids. Catalyzes the dehydration of (2R,3R)-2,3-dihydroxy-3-methylpentanoate (2,3-dihydroxy-3-methylvalerate) into 2-oxo-3-methylpentanoate (2-oxo-3-methylvalerate) and of (2R)-2,3-dihydroxy-3-methylbutanoate (2,3-dihydroxyisovalerate) into 2-oxo-3-methylbutanoate (2-oxoisovalerate), the penultimate precursor to L-isoleucine and L-valine, respectively. This is Dihydroxy-acid dehydratase from Escherichia coli O127:H6 (strain E2348/69 / EPEC).